A 275-amino-acid polypeptide reads, in one-letter code: NH(3)-dependent NAD(+) synthetase (275 aa).

Position 39 to 46 (39 to 46 (GLSGGVDS)) interacts with ATP. Residue D45 participates in Mg(2+) binding. R124 serves as a coordination point for deamido-NAD(+). T144 provides a ligand contact to ATP. E149 contacts Mg(2+). Positions 157 and 164 each coordinate deamido-NAD(+). K173 and S195 together coordinate ATP. 255–256 (HK) contacts deamido-NAD(+).

The protein belongs to the NAD synthetase family. Homodimer.

It carries out the reaction deamido-NAD(+) + NH4(+) + ATP = AMP + diphosphate + NAD(+) + H(+). It functions in the pathway cofactor biosynthesis; NAD(+) biosynthesis; NAD(+) from deamido-NAD(+) (ammonia route): step 1/1. Functionally, catalyzes the ATP-dependent amidation of deamido-NAD to form NAD. Uses ammonia as a nitrogen source. This is NH(3)-dependent NAD(+) synthetase from Staphylothermus marinus (strain ATCC 43588 / DSM 3639 / JCM 9404 / F1).